We begin with the raw amino-acid sequence, 285 residues long: Small ribosomal subunit protein uS2 (285 aa).

Residues 231–285 are disordered; that stretch reads GGKSGQAAAEPMAEWERELLEQHNAQQAEQAEAPAAEAPAEPAEAPAAEAAPQGE. Residues 255-285 are compositionally biased toward low complexity; the sequence is AQQAEQAEAPAAEAPAEPAEAPAAEAAPQGE.

It belongs to the universal ribosomal protein uS2 family.

The sequence is that of Small ribosomal subunit protein uS2 from Micrococcus luteus (strain ATCC 4698 / DSM 20030 / JCM 1464 / CCM 169 / CCUG 5858 / IAM 1056 / NBRC 3333 / NCIMB 9278 / NCTC 2665 / VKM Ac-2230) (Micrococcus lysodeikticus).